The following is a 198-amino-acid chain: Large ribosomal subunit protein bL25 (198 aa).

The protein belongs to the bacterial ribosomal protein bL25 family. CTC subfamily. As to quaternary structure, part of the 50S ribosomal subunit; part of the 5S rRNA/L5/L18/L25 subcomplex. Contacts the 5S rRNA. Binds to the 5S rRNA independently of L5 and L18.

Functionally, this is one of the proteins that binds to the 5S RNA in the ribosome where it forms part of the central protuberance. The polypeptide is Large ribosomal subunit protein bL25 (Azotobacter vinelandii (strain DJ / ATCC BAA-1303)).